The sequence spans 91 residues: MANTPSAKKRAKQAEKRRSHNASLRSMVRTYIKNVVKAIDAKDLEKAQAAFTAAVPVIDRMADKGIIHKNKAARHKSRLSGHIKALSTAAA.

The segment at 1 to 23 (MANTPSAKKRAKQAEKRRSHNAS) is disordered. The span at 7–20 (AKKRAKQAEKRRSH) shows a compositional bias: basic residues.

It belongs to the bacterial ribosomal protein bS20 family.

Its function is as follows. Binds directly to 16S ribosomal RNA. This Pseudomonas aeruginosa (strain LESB58) protein is Small ribosomal subunit protein bS20.